The sequence spans 160 residues: Putative pre-16S rRNA nuclease (160 aa).

It belongs to the YqgF nuclease family.

It is found in the cytoplasm. Functionally, could be a nuclease involved in processing of the 5'-end of pre-16S rRNA. The chain is Putative pre-16S rRNA nuclease from Cutibacterium acnes (strain DSM 16379 / KPA171202) (Propionibacterium acnes).